A 471-amino-acid chain; its full sequence is 6-phosphogluconate dehydrogenase, decarboxylating (471 aa).

Residues 10–15 (GLAVMG), 33–35 (NRT), 75–77 (VKA), and asparagine 103 contribute to the NADP(+) site. Substrate contacts are provided by residues asparagine 103 and 129–131 (SGG). The active-site Proton acceptor is the lysine 183. Position 186–187 (186–187 (HN)) interacts with substrate. The active-site Proton donor is glutamate 190. Positions 191, 263, 290, 449, and 455 each coordinate substrate.

The protein belongs to the 6-phosphogluconate dehydrogenase family. Homodimer.

The catalysed reaction is 6-phospho-D-gluconate + NADP(+) = D-ribulose 5-phosphate + CO2 + NADPH. Its pathway is carbohydrate degradation; pentose phosphate pathway; D-ribulose 5-phosphate from D-glucose 6-phosphate (oxidative stage): step 3/3. Catalyzes the oxidative decarboxylation of 6-phosphogluconate to ribulose 5-phosphate and CO(2), with concomitant reduction of NADP to NADPH. This Synechococcus elongatus (strain ATCC 33912 / PCC 7942 / FACHB-805) (Anacystis nidulans R2) protein is 6-phosphogluconate dehydrogenase, decarboxylating (gnd).